Consider the following 336-residue polypeptide: tRNA N6-adenosine threonylcarbamoyltransferase (336 aa).

Fe cation is bound by residues His112 and His116. Substrate is bound by residues 136 to 140 (LVSGG), Asp169, Gly182, and Asn276. Fe cation is bound at residue Asp304.

It belongs to the KAE1 / TsaD family. Requires Fe(2+) as cofactor.

It localises to the cytoplasm. The enzyme catalyses L-threonylcarbamoyladenylate + adenosine(37) in tRNA = N(6)-L-threonylcarbamoyladenosine(37) in tRNA + AMP + H(+). In terms of biological role, required for the formation of a threonylcarbamoyl group on adenosine at position 37 (t(6)A37) in tRNAs that read codons beginning with adenine. Is involved in the transfer of the threonylcarbamoyl moiety of threonylcarbamoyl-AMP (TC-AMP) to the N6 group of A37, together with TsaE and TsaB. TsaD likely plays a direct catalytic role in this reaction. This chain is tRNA N6-adenosine threonylcarbamoyltransferase, found in Francisella tularensis subsp. holarctica (strain FTNF002-00 / FTA).